The primary structure comprises 204 residues: B9 domain-containing protein 1 (204 aa).

Positions 9–127 constitute a C2 B9-type domain; sequence FLLMITGQVE…TIPMFVPEST (119 aa).

This sequence belongs to the B9D family. Part of the tectonic-like complex (also named B9 complex).

It is found in the cytoplasm. It localises to the cytoskeleton. The protein localises to the cilium basal body. In terms of biological role, component of the tectonic-like complex, a complex localized at the transition zone of primary cilia and acting as a barrier that prevents diffusion of transmembrane proteins between the cilia and plasma membranes. Required for ciliogenesis and sonic hedgehog/SHH signaling. This chain is B9 domain-containing protein 1 (B9d1), found in Mus musculus (Mouse).